The sequence spans 123 residues: Small ribosomal subunit protein uS12 (123 aa).

The tract at residues 9 to 32 (ANPREVQKSRKKVPALQQSPQKRG) is disordered. A 3-methylthioaspartic acid modification is found at Asp89.

Belongs to the universal ribosomal protein uS12 family. Part of the 30S ribosomal subunit. Contacts proteins S8 and S17. May interact with IF1 in the 30S initiation complex.

In terms of biological role, with S4 and S5 plays an important role in translational accuracy. Interacts with and stabilizes bases of the 16S rRNA that are involved in tRNA selection in the A site and with the mRNA backbone. Located at the interface of the 30S and 50S subunits, it traverses the body of the 30S subunit contacting proteins on the other side and probably holding the rRNA structure together. The combined cluster of proteins S8, S12 and S17 appears to hold together the shoulder and platform of the 30S subunit. This Bradyrhizobium sp. (strain BTAi1 / ATCC BAA-1182) protein is Small ribosomal subunit protein uS12.